The sequence spans 83 residues: MLKKILLSLVVFYQRFISPLTPPTCRFYPTCSQYTREAIEYHGALKGLYLGVRRILKCHPLHKGGFDPVPLKKDKNSKTTHHH.

The tract at residues 64-83 (GGFDPVPLKKDKNSKTTHHH) is disordered.

The protein belongs to the UPF0161 family.

Its subcellular location is the cell membrane. Could be involved in insertion of integral membrane proteins into the membrane. The sequence is that of Putative membrane protein insertion efficiency factor from Staphylococcus epidermidis (strain ATCC 12228 / FDA PCI 1200).